A 200-amino-acid polypeptide reads, in one-letter code: Rubrerythrin (200 aa).

Residues 12–155 (SIKGSKTEKH…ALLAHVEDGS (144 aa)) form the Ferritin-like diiron domain. Fe(3+)-binding residues include Glu-29, Glu-62, Glu-103, Glu-106, Glu-137, His-140, Cys-167, Cys-170, Cys-183, and Cys-186. A Rubredoxin-like domain is found at 162–200 (EIAWQCRNCGYVITSKKAPKLCPACAHPQAYFEPMKTNY).

As to quaternary structure, homodimer. Possesses two rubredoxin-like centers and two non-sulfur oxo-bridged di-iron centers per dimer. Fe(3+) is required as a cofactor.

It is found in the cytoplasm. Functionally, may provide oxidative stress protection via catalytic reduction of intracellular hydrogen peroxide. This chain is Rubrerythrin (rbr), found in Porphyromonas gingivalis (strain ATCC BAA-308 / W83).